A 282-amino-acid polypeptide reads, in one-letter code: Putative glycosyltransferase HI_0765 (282 aa).

Belongs to the glycosyltransferase 25 family.

The polypeptide is Putative glycosyltransferase HI_0765 (Haemophilus influenzae (strain ATCC 51907 / DSM 11121 / KW20 / Rd)).